Reading from the N-terminus, the 364-residue chain is Dual-specificity RNA methyltransferase RlmN (364 aa).

The active-site Proton acceptor is E91. The 237-residue stretch at 97 to 333 folds into the Radical SAM core domain; that stretch reads ESDRGTLCIS…VTVRKTRGDD (237 aa). C104 and C338 form a disulfide bridge. [4Fe-4S] cluster contacts are provided by C111, C115, and C118. Residues 164–165, S196, 218–220, and N295 each bind S-adenosyl-L-methionine; these read GE and SLH. C338 (S-methylcysteine intermediate) is an active-site residue.

Belongs to the radical SAM superfamily. RlmN family. The cofactor is [4Fe-4S] cluster.

The protein localises to the cytoplasm. The catalysed reaction is adenosine(2503) in 23S rRNA + 2 reduced [2Fe-2S]-[ferredoxin] + 2 S-adenosyl-L-methionine = 2-methyladenosine(2503) in 23S rRNA + 5'-deoxyadenosine + L-methionine + 2 oxidized [2Fe-2S]-[ferredoxin] + S-adenosyl-L-homocysteine. It catalyses the reaction adenosine(37) in tRNA + 2 reduced [2Fe-2S]-[ferredoxin] + 2 S-adenosyl-L-methionine = 2-methyladenosine(37) in tRNA + 5'-deoxyadenosine + L-methionine + 2 oxidized [2Fe-2S]-[ferredoxin] + S-adenosyl-L-homocysteine. In terms of biological role, specifically methylates position 2 of adenine 2503 in 23S rRNA and position 2 of adenine 37 in tRNAs. m2A2503 modification seems to play a crucial role in the proofreading step occurring at the peptidyl transferase center and thus would serve to optimize ribosomal fidelity. In Neisseria meningitidis serogroup C / serotype 2a (strain ATCC 700532 / DSM 15464 / FAM18), this protein is Dual-specificity RNA methyltransferase RlmN.